A 215-amino-acid chain; its full sequence is Adenylate kinase (215 aa).

10 to 15 (GAGKGT) contacts ATP. The NMP stretch occupies residues 30-59 (STGDILRANVREGTELGLAAKAYMDKGELV). Residues T31, R36, 57–59 (ELV), 85–88 (GYPR), and Q92 contribute to the AMP site. Residues 126–162 (GRLMCKCGASYHTIANPPKKDNICDICGGEVYQRDDD) are LID. R127 provides a ligand contact to ATP. The Zn(2+) site is built by C130 and C132. 135–136 (SY) provides a ligand contact to ATP. Zn(2+) is bound by residues C149 and C152. The AMP site is built by R159 and R170. K198 contributes to the ATP binding site.

It belongs to the adenylate kinase family. In terms of assembly, monomer.

The protein localises to the cytoplasm. It catalyses the reaction AMP + ATP = 2 ADP. It functions in the pathway purine metabolism; AMP biosynthesis via salvage pathway; AMP from ADP: step 1/1. Functionally, catalyzes the reversible transfer of the terminal phosphate group between ATP and AMP. Plays an important role in cellular energy homeostasis and in adenine nucleotide metabolism. The polypeptide is Adenylate kinase (Methanosarcina mazei (strain ATCC BAA-159 / DSM 3647 / Goe1 / Go1 / JCM 11833 / OCM 88) (Methanosarcina frisia)).